The sequence spans 446 residues: ATP-dependent protease ATPase subunit HslU (446 aa).

Residues Val-17, 59–64 (GVGKTE), Asp-255, Glu-320, and Arg-392 each bind ATP.

It belongs to the ClpX chaperone family. HslU subfamily. In terms of assembly, a double ring-shaped homohexamer of HslV is capped on each side by a ring-shaped HslU homohexamer. The assembly of the HslU/HslV complex is dependent on binding of ATP.

The protein localises to the cytoplasm. ATPase subunit of a proteasome-like degradation complex; this subunit has chaperone activity. The binding of ATP and its subsequent hydrolysis by HslU are essential for unfolding of protein substrates subsequently hydrolyzed by HslV. HslU recognizes the N-terminal part of its protein substrates and unfolds these before they are guided to HslV for hydrolysis. The sequence is that of ATP-dependent protease ATPase subunit HslU from Azotobacter vinelandii (strain DJ / ATCC BAA-1303).